Consider the following 193-residue polypeptide: MIVRLTSEHPDGARAARRLRARAAAFLAALGREDAELSILLVTDRRIRTLNREWRQKDQATDVLSFPISEPPGAGALLGDVVISLDTAARRARSDGRRVGAELDRYLAHGILHLLGYDHERPADARAMAEKEAELARAEGLVGAALREGRREGRAGEAKDRWTRSPTSISTPSRSGSTARGSRAKTSRAGSRT.

Zn(2+) contacts are provided by H109, H113, and H119. A disordered region spans residues 143–193 (GAALREGRREGRAGEAKDRWTRSPTSISTPSRSGSTARGSRAKTSRAGSRT). Positions 147 to 163 (REGRREGRAGEAKDRWT) are enriched in basic and acidic residues. Low complexity predominate over residues 164–181 (RSPTSISTPSRSGSTARG).

The protein belongs to the endoribonuclease YbeY family. Requires Zn(2+) as cofactor.

It is found in the cytoplasm. Single strand-specific metallo-endoribonuclease involved in late-stage 70S ribosome quality control and in maturation of the 3' terminus of the 16S rRNA. The polypeptide is Endoribonuclease YbeY (Anaeromyxobacter dehalogenans (strain 2CP-C)).